A 154-amino-acid polypeptide reads, in one-letter code: Transcriptional repressor NrdR (154 aa).

A zinc finger spans residues 3 to 34 (CPFCNAPDTKVIDSRLATEGAQVRRRRECMSC). Residues 49–139 (PRVIKSDGNR…VYRSFQDVNA (91 aa)) enclose the ATP-cone domain.

This sequence belongs to the NrdR family. Zn(2+) serves as cofactor.

Functionally, negatively regulates transcription of bacterial ribonucleotide reductase nrd genes and operons by binding to NrdR-boxes. The sequence is that of Transcriptional repressor NrdR from Hydrogenovibrio crunogenus (strain DSM 25203 / XCL-2) (Thiomicrospira crunogena).